Reading from the N-terminus, the 313-residue chain is Probable cell division protein WhiA (313 aa).

The H-T-H motif DNA-binding region spans 274–308 (SLKELGELVPGGPISKSGVNHRLRKLNAYADELRA).

Belongs to the WhiA family.

Involved in cell division and chromosome segregation. This chain is Probable cell division protein WhiA, found in Limosilactobacillus reuteri subsp. reuteri (strain JCM 1112) (Lactobacillus reuteri).